A 219-amino-acid polypeptide reads, in one-letter code: MTDHRTRFLQLALDADALRFGEFTLKSGRLSPYFFNAGRFDSGAKTAQLAQCYADAIEAAGLDFDLLFGPAYKGIPLATALACAYAGRGRDLPLAFNRKEAKDHGEGGTLIGAPLAGRQVLIVDDVITAGTAIREALAIIRAAGGTPSGIAVALDRQEIASDQDRRSAAQAVAAEAGIPVIAVANLGDLLAFAAGNADLVGFQEPLLAYRGRYGTDTTG.

Lys26 contacts 5-phospho-alpha-D-ribose 1-diphosphate. 34 to 35 (FF) contributes to the orotate binding site. Residues 72–73 (YK), Arg98, Lys99, Lys102, His104, and 124–132 (DDVITAGTA) each bind 5-phospho-alpha-D-ribose 1-diphosphate. Orotate is bound by residues Thr128 and Arg156.

This sequence belongs to the purine/pyrimidine phosphoribosyltransferase family. PyrE subfamily. Homodimer. Requires Mg(2+) as cofactor.

It carries out the reaction orotidine 5'-phosphate + diphosphate = orotate + 5-phospho-alpha-D-ribose 1-diphosphate. Its pathway is pyrimidine metabolism; UMP biosynthesis via de novo pathway; UMP from orotate: step 1/2. Catalyzes the transfer of a ribosyl phosphate group from 5-phosphoribose 1-diphosphate to orotate, leading to the formation of orotidine monophosphate (OMP). The protein is Orotate phosphoribosyltransferase of Xanthomonas axonopodis pv. citri (strain 306).